The following is a 160-amino-acid chain: uncharacterized protein (160 aa).

Helical transmembrane passes span 7-27 (IFLKIALVLIGIPILALCIFL), 48-68 (LVFIYLYVTAIPFYFALYQAF), 95-115 (AVTISIFYAAGMPVFYLMAEI), and 121-141 (IIVIGLVIIFASMVIAVFAAV).

It is found in the cell membrane. This is an uncharacterized protein from Bacillus subtilis (strain 168).